The sequence spans 149 residues: Active regulator of SIRT1 (149 aa).

The disordered stretch occupies residues Met-1–Ala-64. The segment covering Lys-8 to Gly-19 has biased composition (basic and acidic residues). Residues Ser-30–Lys-41 show a composition bias toward low complexity. The span at Gly-43–Lys-52 shows a compositional bias: basic residues.

Belongs to the AROS family. Part of the small subunit (SSU) processome, composed of more than 70 proteins and the RNA chaperone small nucleolar RNA (snoRNA) U3.

It localises to the nucleus. The protein localises to the nucleolus. Its function is as follows. Part of the small subunit (SSU) processome, first precursor of the small eukaryotic ribosomal subunit. During the assembly of the SSU processome in the nucleolus, many ribosome biogenesis factors, an RNA chaperone and ribosomal proteins associate with the nascent pre-rRNA and work in concert to generate RNA folding, modifications, rearrangements and cleavage as well as targeted degradation of pre-ribosomal RNA by the RNA exosome. Acts as a chaperone that specifically mediates the integration of RPS19 in state post-A1. Direct regulator of SIRT1. The polypeptide is Active regulator of SIRT1 (rps19bp1) (Xenopus tropicalis (Western clawed frog)).